The sequence spans 489 residues: Acetyl-coenzyme A carboxylase carboxyl transferase subunit beta, chloroplastic (489 aa).

Positions 222-489 constitute a CoA carboxyltransferase N-terminal domain; sequence LWVQCENCYG…FFPLNSNSIK (268 aa). Zn(2+) is bound by residues C226, C229, C245, and C248. A C4-type zinc finger spans residues 226 to 248; the sequence is CENCYGLNYKKFFRSKMNICEQC.

The protein belongs to the AccD/PCCB family. Acetyl-CoA carboxylase is a heterohexamer composed of biotin carboxyl carrier protein, biotin carboxylase and 2 subunits each of ACCase subunit alpha and ACCase plastid-coded subunit beta (accD). Zn(2+) is required as a cofactor.

The protein localises to the plastid. It localises to the chloroplast stroma. The enzyme catalyses N(6)-carboxybiotinyl-L-lysyl-[protein] + acetyl-CoA = N(6)-biotinyl-L-lysyl-[protein] + malonyl-CoA. Its pathway is lipid metabolism; malonyl-CoA biosynthesis; malonyl-CoA from acetyl-CoA: step 1/1. Functionally, component of the acetyl coenzyme A carboxylase (ACC) complex. Biotin carboxylase (BC) catalyzes the carboxylation of biotin on its carrier protein (BCCP) and then the CO(2) group is transferred by the transcarboxylase to acetyl-CoA to form malonyl-CoA. This is Acetyl-coenzyme A carboxylase carboxyl transferase subunit beta, chloroplastic from Buxus microphylla (Littleleaf boxwood).